Reading from the N-terminus, the 278-residue chain is MTLQIIPEISSLRARLAGENSIALVPTMGNLHAGHIHLVELARQRAGCVVTSIFVNPLQFGANEDLDNYPRTLAEDCAKLQAAGADIVFTPSVQEMYPTTQTMRITPPPIANELCGAARPGHFDGVATVVMKLFNIVQPHIAVFGKKDFQQLFIIRELVRQFNLPIDIIAGETQREHTGLALSSRNGYLNEGQKLEAQRLYRTLKLIVDNVQQGNRDYPAIEAQSSQYLTQLGWIVDYISIRSSTTLLPASLDDHNLVVLAAARQGNTRLIDNIEFSV.

28-35 contacts ATP; the sequence is MGNLHAGH. His35 serves as the catalytic Proton donor. Gln59 contacts (R)-pantoate. Gln59 is a binding site for beta-alanine. Position 145-148 (145-148) interacts with ATP; sequence GKKD. Gln151 contributes to the (R)-pantoate binding site. ATP is bound at residue 182–185; the sequence is LSSR.

The protein belongs to the pantothenate synthetase family. In terms of assembly, homodimer.

The protein localises to the cytoplasm. The catalysed reaction is (R)-pantoate + beta-alanine + ATP = (R)-pantothenate + AMP + diphosphate + H(+). Its pathway is cofactor biosynthesis; (R)-pantothenate biosynthesis; (R)-pantothenate from (R)-pantoate and beta-alanine: step 1/1. Catalyzes the condensation of pantoate with beta-alanine in an ATP-dependent reaction via a pantoyl-adenylate intermediate. This is Pantothenate synthetase from Methylobacillus flagellatus (strain ATCC 51484 / DSM 6875 / VKM B-1610 / KT).